Consider the following 299-residue polypeptide: 4-diphosphocytidyl-2-C-methyl-D-erythritol kinase (299 aa).

Lys-11 is a catalytic residue. 94 to 104 (PQGGGLGGGSS) serves as a coordination point for ATP. Asp-136 is a catalytic residue.

It belongs to the GHMP kinase family. IspE subfamily.

It catalyses the reaction 4-CDP-2-C-methyl-D-erythritol + ATP = 4-CDP-2-C-methyl-D-erythritol 2-phosphate + ADP + H(+). It participates in isoprenoid biosynthesis; isopentenyl diphosphate biosynthesis via DXP pathway; isopentenyl diphosphate from 1-deoxy-D-xylulose 5-phosphate: step 3/6. Catalyzes the phosphorylation of the position 2 hydroxy group of 4-diphosphocytidyl-2C-methyl-D-erythritol. The polypeptide is 4-diphosphocytidyl-2-C-methyl-D-erythritol kinase (Bordetella parapertussis (strain 12822 / ATCC BAA-587 / NCTC 13253)).